A 538-amino-acid polypeptide reads, in one-letter code: NAD(P)H-quinone oxidoreductase chain 4 1 (538 aa).

The next 13 membrane-spanning stretches (helical) occupy residues 7-27 (FPWL…IPII), 37-57 (WYGL…FWHY), 88-108 (LSMP…FAAW), 116-136 (LFYG…VAQD), 137-157 (LLLF…LISI), 170-190 (FILY…ALAF), 210-230 (AIEL…LPIF), 244-264 (SAPG…YALI), 278-298 (FAPV…CCAF), 315-335 (MGFV…GAVL), 336-356 (QMVS…VTYE), 388-408 (LALP…GIAT), and 418-438 (VVVV…LLSM).

Belongs to the complex I subunit 4 family.

The protein resides in the cellular thylakoid membrane. The catalysed reaction is a plastoquinone + NADH + (n+1) H(+)(in) = a plastoquinol + NAD(+) + n H(+)(out). The enzyme catalyses a plastoquinone + NADPH + (n+1) H(+)(in) = a plastoquinol + NADP(+) + n H(+)(out). Functionally, NDH-1 shuttles electrons from NAD(P)H, via FMN and iron-sulfur (Fe-S) centers, to quinones in the respiratory chain. The immediate electron acceptor for the enzyme in this species is believed to be plastoquinone. Couples the redox reaction to proton translocation (for every two electrons transferred, four hydrogen ions are translocated across the cytoplasmic membrane), and thus conserves the redox energy in a proton gradient. In Nostoc sp. (strain PCC 7120 / SAG 25.82 / UTEX 2576), this protein is NAD(P)H-quinone oxidoreductase chain 4 1.